The primary structure comprises 92 residues: Cell division topological specificity factor (92 aa).

This sequence belongs to the MinE family.

Functionally, prevents the cell division inhibition by proteins MinC and MinD at internal division sites while permitting inhibition at polar sites. This ensures cell division at the proper site by restricting the formation of a division septum at the midpoint of the long axis of the cell. This is Cell division topological specificity factor from Symbiobacterium thermophilum (strain DSM 24528 / JCM 14929 / IAM 14863 / T).